The chain runs to 310 residues: GPN-loop GTPase 2 (310 aa).

Position 2 is an N-acetylalanine (Ala2). 19 to 24 (GSGKTT) is a binding site for GTP. The short motif at 76 to 78 (GPN) is the Gly-Pro-Asn (GPN)-loop; involved in dimer interface element. Residue 178-181 (SKMD) participates in GTP binding.

Belongs to the GPN-loop GTPase family. Heterodimers with GPN1 or GPN3. Binds to RNA polymerase II (RNAPII).

Small GTPase required for proper localization of RNA polymerase II and III (RNAPII and RNAPIII). May act at an RNAP assembly step prior to nuclear import. The sequence is that of GPN-loop GTPase 2 (GPN2) from Bos taurus (Bovine).